A 639-amino-acid polypeptide reads, in one-letter code: Chaperone protein DnaK (639 aa).

At Thr-198 the chain carries Phosphothreonine; by autocatalysis. The segment at 602–639 (QAKSQAQGGDNADAGKQANATADDVVDAEFEEVKDDKK) is disordered. Positions 625 to 639 (DVVDAEFEEVKDDKK) are enriched in acidic residues.

The protein belongs to the heat shock protein 70 family.

Acts as a chaperone. This Shewanella baltica (strain OS195) protein is Chaperone protein DnaK.